A 156-amino-acid polypeptide reads, in one-letter code: Arginine repressor (156 aa).

This sequence belongs to the ArgR family.

It localises to the cytoplasm. Its pathway is amino-acid biosynthesis; L-arginine biosynthesis [regulation]. In terms of biological role, regulates arginine biosynthesis genes. This Vibrio atlanticus (strain LGP32) (Vibrio splendidus (strain Mel32)) protein is Arginine repressor.